Reading from the N-terminus, the 303-residue chain is Caspase-7 (303 aa).

The segment at 1–27 is disordered; sequence MADDQNCAPELEKADPSGEDGVDAKPD. Position 2 is an N-acetylalanine (alanine 2). Positions 2–23 are cleaved as a propeptide — N-terminally processed; the sequence is ADDQNCAPELEKADPSGEDGVD. Positions 10–27 are enriched in basic and acidic residues; that stretch reads ELEKADPSGEDGVDAKPD. At serine 30 the chain carries Phosphoserine. The tract at residues 38–41 is exosite; that stretch reads KKKK. The segment at 76–87 is loop L1; sequence KNFDKVTGMDVR. Histidine 144 is a catalytic residue. Threonine 173 carries the phosphothreonine modification. Cysteine 186 is a catalytic residue. Residues 187–196 form a loop L2 region; that stretch reads RGTELDDGVQ. Residues 199 to 206 constitute a propeptide that is removed on maturation; sequence SGPINETD. The segment at 226-238 is loop L3; the sequence is VPGYYSWRNPGKG. Residue serine 239 is modified to Phosphoserine. Positions 274 to 288 are loop L4; the sequence is ESQCDDPCFNEKKQI.

It belongs to the peptidase C14A family. In terms of assembly, heterotetramer that consists of two anti-parallel arranged heterodimers, each one formed by a 20 kDa (p20) and a 11 kDa (p11) subunit. Interacts with XIAP (via its second BIR domain); inhibiting CASP7 activity. Interacts with BIRC6/bruce. Interacts with ATXN3 (short isoform 1). Interacts with HSPA5. Post-translationally, cleavage by different proteases, such as granzyme B (GZMB), caspase-1 (CASP1), caspase-8 (CASP8) or caspase-9 (CASP9) generate the two active subunits. Its involvement in different programmed cell death processes is probably specified by the protease that activates CASP7. Cleaved and activated by initiator caspases (CASP8 and/or CASP9), leading to execution phase of apoptosis. Cleavage and maturation by GZMB regulates granzyme-mediated programmed cell death. Cleaved and activated by CASP1 in response to bacterial infection. Propeptide domains can also be cleaved efficiently by CASP3. Active heterodimers between the small subunit of caspase-7 and the large subunit of CASP3, and vice versa, also occur. Also cleaved at the N-terminus at alternative sites by CAPN1, leading to its activation. Phosphorylation at Ser-30 and Ser-239 by PAK2 inhibits its activity. Phosphorylation at Ser-30 prevents cleavage and activation by initiator caspase CASP9, while phosphorylation at Ser-239 prevents thiol protease activity by preventing substrate-binding. In terms of processing, ubiquitinated by BIRC6; this activity is inhibited by DIABLO/SMAC.

It is found in the cytoplasm. It localises to the cytosol. The protein resides in the nucleus. Its subcellular location is the secreted. The protein localises to the extracellular space. It catalyses the reaction Strict requirement for an Asp residue at position P1 and has a preferred cleavage sequence of Asp-Glu-Val-Asp-|-.. During activation, the N-terminal disordered prodomain is removed by cleavage. Concomitantly, double cleavage gives rise to a large Caspase-7 subunit p20 and a small Caspase-7 subunit p11. The two large and two small subunits then assemble to form the active CASP7 complex. Can be cleaved and activated by different caspases, depending on the context. Cleaved and activated by initiator caspases (CASP8 and/or CASP9), leading to execution phase of apoptosis. Cleavage and maturation by GZMB regulates granzyme-mediated programmed cell death. Cleavage and maturation by CASP1 regulates pyroptosis. Inhibited by XIAP, which directly binds to the active site pocket and obstructs substrate entry. Phosphorylation at Ser-30 and Ser-239 by PAK2 inhibits its activity. Inhibited by BIRC6; following inhibition of BIRC6-caspase binding by DIABLO/SMAC, BIRC6 is subjected to caspase cleavage, leading to an increase in active caspases. Its function is as follows. Thiol protease involved in different programmed cell death processes, such as apoptosis, pyroptosis or granzyme-mediated programmed cell death, by proteolytically cleaving target proteins. Has a marked preference for Asp-Glu-Val-Asp (DEVD) consensus sequences, with some plasticity for alternate non-canonical sequences. Its involvement in the different programmed cell death processes is probably determined by upstream proteases that activate CASP7. Acts as an effector caspase involved in the execution phase of apoptosis: following cleavage and activation by initiator caspases (CASP8 and/or CASP9), mediates execution of apoptosis by catalyzing cleavage of proteins, such as CLSPN, PARP1, PTGES3 and YY1. Compared to CASP3, acts as a minor executioner caspase and cleaves a limited set of target proteins. Acts as a key regulator of the inflammatory response in response to bacterial infection by catalyzing cleavage and activation of the sphingomyelin phosphodiesterase SMPD1 in the extracellular milieu, thereby promoting membrane repair. Regulates pyroptosis in intestinal epithelial cells: cleaved and activated by CASP1 in response to S.typhimurium infection, promoting its secretion to the extracellular milieu, where it catalyzes activation of SMPD1, generating ceramides that repair membranes and counteract the action of gasdermin-D (GSDMD) pores. Regulates granzyme-mediated programmed cell death in hepatocytes: cleaved and activated by granzyme B (GZMB) in response to bacterial infection, promoting its secretion to the extracellular milieu, where it catalyzes activation of SMPD1, generating ceramides that repair membranes and counteract the action of perforin (PRF1) pores. Following cleavage by CASP1 in response to inflammasome activation, catalyzes processing and inactivation of PARP1, alleviating the transcription repressor activity of PARP1. Acts as an inhibitor of type I interferon production during virus-induced apoptosis by mediating cleavage of antiviral proteins CGAS, IRF3 and MAVS, thereby preventing cytokine overproduction. Cleaves and activates sterol regulatory element binding proteins (SREBPs). Cleaves phospholipid scramblase proteins XKR4, XKR8 and XKR9. Cleaves BIRC6 following inhibition of BIRC6-caspase binding by DIABLO/SMAC. This is Caspase-7 (CASP7) from Mesocricetus auratus (Golden hamster).